A 377-amino-acid chain; its full sequence is Queuine tRNA-ribosyltransferase (377 aa).

D89 (proton acceptor) is an active-site residue. Substrate contacts are provided by residues 89 to 93 (DSGGF), D143, Q187, and G214. The RNA binding stretch occupies residues 245–251 (GVGKPED). D264 functions as the Nucleophile in the catalytic mechanism. The RNA binding; important for wobble base 34 recognition stretch occupies residues 269–273 (TRNAR). Zn(2+) is bound by residues C302, C304, C307, and H333.

It belongs to the queuine tRNA-ribosyltransferase family. Homodimer. Within each dimer, one monomer is responsible for RNA recognition and catalysis, while the other monomer binds to the replacement base PreQ1. Zn(2+) is required as a cofactor.

It catalyses the reaction 7-aminomethyl-7-carbaguanine + guanosine(34) in tRNA = 7-aminomethyl-7-carbaguanosine(34) in tRNA + guanine. Its pathway is tRNA modification; tRNA-queuosine biosynthesis. Catalyzes the base-exchange of a guanine (G) residue with the queuine precursor 7-aminomethyl-7-deazaguanine (PreQ1) at position 34 (anticodon wobble position) in tRNAs with GU(N) anticodons (tRNA-Asp, -Asn, -His and -Tyr). Catalysis occurs through a double-displacement mechanism. The nucleophile active site attacks the C1' of nucleotide 34 to detach the guanine base from the RNA, forming a covalent enzyme-RNA intermediate. The proton acceptor active site deprotonates the incoming PreQ1, allowing a nucleophilic attack on the C1' of the ribose to form the product. After dissociation, two additional enzymatic reactions on the tRNA convert PreQ1 to queuine (Q), resulting in the hypermodified nucleoside queuosine (7-(((4,5-cis-dihydroxy-2-cyclopenten-1-yl)amino)methyl)-7-deazaguanosine). This is Queuine tRNA-ribosyltransferase from Shewanella halifaxensis (strain HAW-EB4).